Here is a 277-residue protein sequence, read N- to C-terminus: Ras suppressor protein 1 (277 aa).

A disordered region spans residues 1–23 (MSKSLKKLVEESREKNQPEVDMS). Serine 2 carries the N-acetylserine modification. Basic and acidic residues predominate over residues 7–23 (KLVEESREKNQPEVDMS). 7 LRR repeats span residues 41–63 (HITQ…AELK), 64–85 (NLEV…ISSL), 87–108 (KLKH…FGSS), 110–133 (LLEV…FFYL), 135–156 (TLRA…IGKL), 158–179 (KLQI…IGEL), and 181–202 (QLKE…LGNL). Residues 250-277 (MQANPEPPKKNNDKSKKISRKPLAAKNK) form a disordered region. Basic and acidic residues predominate over residues 256–265 (PPKKNNDKSK).

Potentially plays a role in the Ras signal transduction pathway. Capable of suppressing v-Ras transformation in vitro. This Mus musculus (Mouse) protein is Ras suppressor protein 1 (Rsu1).